Reading from the N-terminus, the 131-residue chain is UPF0212 protein TK1194 (131 aa).

Belongs to the UPF0212 family.

In Thermococcus kodakarensis (strain ATCC BAA-918 / JCM 12380 / KOD1) (Pyrococcus kodakaraensis (strain KOD1)), this protein is UPF0212 protein TK1194.